The chain runs to 486 residues: 2-succinylbenzoate--CoA ligase (486 aa).

The protein belongs to the ATP-dependent AMP-binding enzyme family. MenE subfamily.

The enzyme catalyses 2-succinylbenzoate + ATP + CoA = 2-succinylbenzoyl-CoA + AMP + diphosphate. Its pathway is quinol/quinone metabolism; 1,4-dihydroxy-2-naphthoate biosynthesis; 1,4-dihydroxy-2-naphthoate from chorismate: step 5/7. The protein operates within quinol/quinone metabolism; menaquinone biosynthesis. Functionally, converts 2-succinylbenzoate (OSB) to 2-succinylbenzoyl-CoA (OSB-CoA). This Bacillus subtilis (strain 168) protein is 2-succinylbenzoate--CoA ligase.